A 61-amino-acid chain; its full sequence is Large ribosomal subunit protein uL30 (61 aa).

The protein belongs to the universal ribosomal protein uL30 family. Part of the 50S ribosomal subunit.

This chain is Large ribosomal subunit protein uL30, found in Nitrosomonas eutropha (strain DSM 101675 / C91 / Nm57).